Consider the following 341-residue polypeptide: ATPase GET3 (341 aa).

34 to 41 (KGGVGKTT) lines the ATP pocket. Residue aspartate 63 is part of the active site. Positions 245 and 272 each coordinate ATP. Zn(2+) is bound by residues cysteine 283 and cysteine 286.

Belongs to the arsA ATPase family. Homodimer.

Its subcellular location is the cytoplasm. The protein resides in the endoplasmic reticulum. Its function is as follows. ATPase required for the post-translational delivery of tail-anchored (TA) proteins to the endoplasmic reticulum. Recognizes and selectively binds the transmembrane domain of TA proteins in the cytosol. This complex then targets to the endoplasmic reticulum by membrane-bound receptors, where the tail-anchored protein is released for insertion. This process is regulated by ATP binding and hydrolysis. ATP binding drives the homodimer towards the closed dimer state, facilitating recognition of newly synthesized TA membrane proteins. ATP hydrolysis is required for insertion. Subsequently, the homodimer reverts towards the open dimer state, lowering its affinity for the membrane-bound receptor, and returning it to the cytosol to initiate a new round of targeting. The chain is ATPase GET3 from Ajellomyces capsulatus (strain H143) (Darling's disease fungus).